The sequence spans 291 residues: Putative GATA transcription factor 13 (291 aa).

The GATA-type zinc finger occupies 187 to 241; sequence KSRRLKCTHCETTTTPQWREGPNGRKTLCNACGIRFRSGRLVLEYRPAASPTFIP. The tract at residues 271–291 is disordered; it reads TSGPETRSRLRNFGRPMSYGQ.

It belongs to the type IV zinc-finger family. Class A subfamily.

The protein resides in the nucleus. Its function is as follows. Transcriptional activator that specifically binds 5'-GATA-3' or 5'-GAT-3' motifs within gene promoters. May be involved in the regulation of some light-responsive genes. This Arabidopsis thaliana (Mouse-ear cress) protein is Putative GATA transcription factor 13 (GATA13).